Reading from the N-terminus, the 35-residue chain is Dolichyl-diphosphooligosaccharide--protein glycosyltransferase subunit 4C (35 aa).

Over 1 to 8 (MFDDQDLG) the chain is Lumenal. A helical transmembrane segment spans residues 9–29 (FFANFLGIFIFILVIAYHFVM). Residues 30 to 35 (ADPKFE) are Cytoplasmic-facing.

It belongs to the OST4 family. Component of the oligosaccharyltransferase (OST) complex.

It is found in the endoplasmic reticulum membrane. Its function is as follows. Subunit of the oligosaccharyl transferase (OST) complex that catalyzes the initial transfer of a defined glycan (Glc(3)Man(9)GlcNAc(2) in eukaryotes) from the lipid carrier dolichol-pyrophosphate to an asparagine residue within an Asn-X-Ser/Thr consensus motif in nascent polypeptide chains, the first step in protein N-glycosylation. N-glycosylation occurs cotranslationally and the complex associates with the Sec61 complex at the channel-forming translocon complex that mediates protein translocation across the endoplasmic reticulum (ER). All subunits are required for a maximal enzyme activity. The sequence is that of Dolichyl-diphosphooligosaccharide--protein glycosyltransferase subunit 4C (OST4C) from Arabidopsis thaliana (Mouse-ear cress).